A 207-amino-acid polypeptide reads, in one-letter code: Small ribosomal subunit protein uS4 (207 aa).

Residues 31–53 form a disordered region; the sequence is KAKFDSKPGQHGRTSGARTSDFG. In terms of domain architecture, S4 RNA-binding spans 97-157; that stretch reads SRLDNVVYRM…EKSKKQARIV (61 aa).

Belongs to the universal ribosomal protein uS4 family. Part of the 30S ribosomal subunit. Contacts protein S5. The interaction surface between S4 and S5 is involved in control of translational fidelity.

Its function is as follows. One of the primary rRNA binding proteins, it binds directly to 16S rRNA where it nucleates assembly of the body of the 30S subunit. In terms of biological role, with S5 and S12 plays an important role in translational accuracy. This chain is Small ribosomal subunit protein uS4, found in Paracidovorax citrulli (strain AAC00-1) (Acidovorax citrulli).